The primary structure comprises 123 residues: Small ribosomal subunit protein uS12cz/uS12cy/uS12cx/uS12w (123 aa).

Positions M1–Q13 are enriched in polar residues. A disordered region spans residues M1–R30. A compositionally biased stretch (basic residues) spans P14–R30.

Belongs to the universal ribosomal protein uS12 family. In terms of assembly, part of the 30S ribosomal subunit.

The protein resides in the plastid. It is found in the chloroplast. In terms of biological role, with S4 and S5 plays an important role in translational accuracy. Located at the interface of the 30S and 50S subunits. The chain is Small ribosomal subunit protein uS12cz/uS12cy/uS12cx/uS12w (rps12-A) from Pelargonium hortorum (Common geranium).